Here is a 405-residue protein sequence, read N- to C-terminus: Subtilisin-like protease 6 (405 aa).

The first 18 residues, 1–18 (FITKAIPIVLAALSAVNG), serve as a signal peptide directing secretion. The propeptide occupies 19–125 (AKILEAGPHA…VRTSTNGTNL (107 aa)). Residues 34 to 118 (KYIVVMKKDV…YIEPDFVVRT (85 aa)) enclose the Inhibitor I9 domain. N-linked (GlcNAc...) asparagine glycosylation is found at Asn-121 and Asn-124. Positions 133-405 (SWGLARVGSK…GEGTTGKLIY (273 aa)) constitute a Peptidase S8 domain. Catalysis depends on charge relay system residues Asp-165 and His-196. N-linked (GlcNAc...) asparagine glycans are attached at residues Asn-250 and Asn-262. Ser-356 serves as the catalytic Charge relay system.

The protein belongs to the peptidase S8 family.

It localises to the secreted. Functionally, secreted subtilisin-like serine protease with keratinolytic activity that contributes to pathogenicity. The protein is Subtilisin-like protease 6 (SUB6) of Trichophyton schoenleinii.